Reading from the N-terminus, the 512-residue chain is Krueppel-like factor 11 (512 aa).

The segment at 109–128 (PQSPDLVEPSTRTPVSPQVT) is disordered. Polar residues predominate over residues 118–128 (STRTPVSPQVT). The residue at position 124 (serine 124) is a Phosphoserine. 3 consecutive C2H2-type zinc fingers follow at residues 394-418 (YVCS…LRTH), 424-448 (FNCS…RRTH), and 454-476 (FVCP…ARRH).

Belongs to the Sp1 C2H2-type zinc-finger protein family. Interacts with SIN3A. Ubiquitous. Higher expression in erythroid cells.

The protein localises to the nucleus. Transcription factor. Activates the epsilon- and gamma-globin gene promoters and, to a much lower degree, the beta-globin gene and represses promoters containing SP1-like binding inhibiting cell growth. Represses transcription of SMAD7 which enhances TGF-beta signaling. Induces apoptosis. The sequence is that of Krueppel-like factor 11 (KLF11) from Homo sapiens (Human).